Here is a 121-residue protein sequence, read N- to C-terminus: Large ribosomal subunit protein uL18 (121 aa).

It belongs to the universal ribosomal protein uL18 family. In terms of assembly, part of the 50S ribosomal subunit; part of the 5S rRNA/L5/L18/L25 subcomplex. Contacts the 5S and 23S rRNAs.

In terms of biological role, this is one of the proteins that bind and probably mediate the attachment of the 5S RNA into the large ribosomal subunit, where it forms part of the central protuberance. The sequence is that of Large ribosomal subunit protein uL18 from Ehrlichia chaffeensis (strain ATCC CRL-10679 / Arkansas).